We begin with the raw amino-acid sequence, 221 residues long: Protein GrpE (221 aa).

The tract at residues 1–83 (MEQEQKATQE…AKNCRTRSED (83 aa)) is disordered. The span at 23 to 32 (QEEKAEERGG) shows a compositional bias: basic and acidic residues. Residues 41–53 (ENLQQENTQAQQE) show a composition bias toward low complexity.

It belongs to the GrpE family. Homodimer.

It is found in the cytoplasm. Participates actively in the response to hyperosmotic and heat shock by preventing the aggregation of stress-denatured proteins, in association with DnaK and GrpE. It is the nucleotide exchange factor for DnaK and may function as a thermosensor. Unfolded proteins bind initially to DnaJ; upon interaction with the DnaJ-bound protein, DnaK hydrolyzes its bound ATP, resulting in the formation of a stable complex. GrpE releases ADP from DnaK; ATP binding to DnaK triggers the release of the substrate protein, thus completing the reaction cycle. Several rounds of ATP-dependent interactions between DnaJ, DnaK and GrpE are required for fully efficient folding. This chain is Protein GrpE, found in Geobacillus stearothermophilus (Bacillus stearothermophilus).